The following is a 254-amino-acid chain: Capsid protein (254 aa).

A Bipartite nuclear localization signal motif is present at residues 9–35 (VYSRKRGRYGKTYQALGVKSQRELEQL).

It belongs to the geminiviridae capsid protein family. In terms of assembly, homomultimer. Interacts with the movement protein. Binds to single-stranded and double-stranded viral DNA.

The protein localises to the virion. It localises to the host nucleus. Its function is as follows. Encapsidates the viral genome into characteristic twinned ('geminate') particles. Binds the genomic viral ssDNA and shuttles it into and out of the cell nucleus. Plays a role in protection of the genome from degradation, virus acquisition and transmission by insect vectors, infectivity, and systemic movement. The CP of monopartite geminiviruses is absolutely essential for virus movement. In Tobacco yellow dwarf virus (strain Australia) (TYDV), this protein is Capsid protein.